The following is a 436-amino-acid chain: MFDSTLNPLWQRYILAVQEEVKPALGCTEPISLALAAAVAAAELEGPVERVEAWVSPNLMKNGLGVTVPGTGMVGLPIAAALGALGGNANAGLEVLKDATAQAIADAKALLAAGKVSVKIQEPCDEILFSRAKVWNGEKWACVTIVGGHTNIVHIETHNGVVFTQQACVTEGEQESPLTVLSRTTLAEILKFVNEVPFAAIRFILDSAKLNCALSQEGLSGNWGLHIGATLEKQCERGLLAKDLSSSIVIRTSAASDARMGGATLPAMSNSGSGNQGITATMPVVVVAEHFGADDERLARALMLSHLSAIYIHNQLPRLSALCAATTAAMGAAAGMAWLVDGRYETISMAISSMIGDVSGMICDGASNSCAMKVSTSASAAWKAVLMALDDTAVTGNEGIVAHDVEQSIANLCALASHSMQQTDRQIIEIMASKAR.

This sequence belongs to the UPF0597 family.

This is UPF0597 protein YhaM from Escherichia coli O127:H6 (strain E2348/69 / EPEC).